The sequence spans 145 residues: Large ribosomal subunit protein uL13 (145 aa).

This sequence belongs to the universal ribosomal protein uL13 family. Part of the 50S ribosomal subunit.

In terms of biological role, this protein is one of the early assembly proteins of the 50S ribosomal subunit, although it is not seen to bind rRNA by itself. It is important during the early stages of 50S assembly. The chain is Large ribosomal subunit protein uL13 from Bacillus mycoides (strain KBAB4) (Bacillus weihenstephanensis).